The following is an 88-amino-acid chain: Small ribosomal subunit protein uS17c (88 aa).

It belongs to the universal ribosomal protein uS17 family. As to quaternary structure, part of the 30S ribosomal subunit.

The protein localises to the plastid. Its subcellular location is the cyanelle. One of the primary rRNA binding proteins, it binds specifically to the 5'-end of 16S ribosomal RNA. This Cyanophora paradoxa protein is Small ribosomal subunit protein uS17c (rps17).